The chain runs to 108 residues: UPF0060 membrane protein CKO_01576 (108 aa).

4 helical membrane passes run 6-26 (LLFF…WLWL), 29-49 (GATA…VWLL), 61-81 (AAYG…VDGV), and 85-105 (LYDW…VAGW).

The protein belongs to the UPF0060 family.

Its subcellular location is the cell inner membrane. This chain is UPF0060 membrane protein CKO_01576, found in Citrobacter koseri (strain ATCC BAA-895 / CDC 4225-83 / SGSC4696).